The primary structure comprises 637 residues: 1-deoxy-D-xylulose-5-phosphate synthase (637 aa).

Residues His76 and Gly117–Ser119 each bind thiamine diphosphate. Position 148 (Asp148) interacts with Mg(2+). Thiamine diphosphate-binding positions include Gly149–Ala150, Asn177, Tyr294, and Glu381. Mg(2+) is bound at residue Asn177.

It belongs to the transketolase family. DXPS subfamily. Homodimer. The cofactor is Mg(2+). Thiamine diphosphate serves as cofactor.

The enzyme catalyses D-glyceraldehyde 3-phosphate + pyruvate + H(+) = 1-deoxy-D-xylulose 5-phosphate + CO2. The protein operates within metabolic intermediate biosynthesis; 1-deoxy-D-xylulose 5-phosphate biosynthesis; 1-deoxy-D-xylulose 5-phosphate from D-glyceraldehyde 3-phosphate and pyruvate: step 1/1. In terms of biological role, catalyzes the acyloin condensation reaction between C atoms 2 and 3 of pyruvate and glyceraldehyde 3-phosphate to yield 1-deoxy-D-xylulose-5-phosphate (DXP). This chain is 1-deoxy-D-xylulose-5-phosphate synthase, found in Neisseria meningitidis serogroup B (strain ATCC BAA-335 / MC58).